The following is a 744-amino-acid chain: Adenosylcobalamin-dependent ribonucleoside-triphosphate reductase (744 aa).

A disulfide bridge connects residues C120 and C424. The segment at 148-159 is effector region-1; that stretch reads SMPFSFLFDQLM. An effector region-2 region spans residues 169-318; the sequence is VNSNIKQIPK…ICNLIGKTVV (150 aa). Active-site residues include C413 and E415. The tract at residues 570 to 631 is adenosylcobalamin-binding-1; that stretch reads FHYAGYLIQR…SKNFASAGTV (62 aa). Positions 690–729 are adenosylcobalamin-binding-2; that stretch reads LKQAPKEPINKKTYEERAALITDDVEEVFTKQNDDQKGLE.

The protein belongs to the class II ribonucleoside-triphosphate reductase family. As to quaternary structure, monomer. The cofactor is adenosylcob(III)alamin.

The catalysed reaction is a 2'-deoxyribonucleoside 5'-triphosphate + [thioredoxin]-disulfide + H2O = a ribonucleoside 5'-triphosphate + [thioredoxin]-dithiol. With respect to regulation, allosterically regulated by ATP and dNTP. This is Adenosylcobalamin-dependent ribonucleoside-triphosphate reductase (rtpR) from Lactobacillus acidophilus (strain ATCC 700396 / NCK56 / N2 / NCFM).